The primary structure comprises 187 residues: Adenylate kinase (187 aa).

10–15 (GSGKGT) lines the ATP pocket. The NMP stretch occupies residues 30-59 (STGDLLRSEVVAGTPLGLQAKQVMAQGDLV). Residues Thr31, Arg36, 57–59 (DLV), 85–88 (GYPR), and Gln92 each bind AMP. The tract at residues 126-136 (GRAQAEGREDD) is LID. Residue Arg127 participates in ATP binding. AMP contacts are provided by Arg133 and Arg144. Gly172 provides a ligand contact to ATP.

Belongs to the adenylate kinase family. In terms of assembly, monomer.

It is found in the cytoplasm. It catalyses the reaction AMP + ATP = 2 ADP. The protein operates within purine metabolism; AMP biosynthesis via salvage pathway; AMP from ADP: step 1/1. Catalyzes the reversible transfer of the terminal phosphate group between ATP and AMP. Plays an important role in cellular energy homeostasis and in adenine nucleotide metabolism. The chain is Adenylate kinase from Xylella fastidiosa (strain 9a5c).